The following is a 136-amino-acid chain: MKSQFKANVLAILLVSLFLINGLVFLSKTLFKLFNFRVTHSLNNYYTFNLLIKAWRSIKNDFSSLNNFVFFIERQVHNFIGLLIEQPSIEEDNQPEVIEETPKLEIVVVIEKEVINSKLSDYFCFFKYRSLFFELR.

Residues 7–27 form a helical membrane-spanning segment; the sequence is ANVLAILLVSLFLINGLVFLS.

The protein localises to the membrane. This is an uncharacterized protein from Mycoplasma pneumoniae (strain ATCC 29342 / M129 / Subtype 1) (Mycoplasmoides pneumoniae).